Consider the following 658-residue polypeptide: Sulfate transporter 3.1 (658 aa).

Topologically, residues 1-85 are cytoplasmic; the sequence is MGTEDYTFPQ…RYNLKFFKSD (85 aa). Residues 86–106 traverse the membrane as a helical segment; that stretch reads LIAGITIASLAIPQGISYAKL. At 107-108 the chain is on the extracellular side; it reads AN. A helical membrane pass occupies residues 109 to 129; that stretch reads LPPILGLYSSFVPPLVYAVLG. Topologically, residues 130-133 are cytoplasmic; that stretch reads SSRD. A helical membrane pass occupies residues 134-154; it reads LAVGTVAVASLLTGAMLSKEV. Over 155–163 the chain is Extracellular; the sequence is DAEKDPKLY. A helical membrane pass occupies residues 164–184; the sequence is LHLAFTATFFAGVLEASLGIF. A topological domain (cytoplasmic) is located at residue arginine 185. A helical transmembrane segment spans residues 186-206; it reads LGFIVDFLSHATIVGFMGGAA. Residues 207–245 lie on the Extracellular side of the membrane; sequence TVVSLQQLKGIFGLKHFTDSTDVISVMRSVFSQTHEWRW. A helical membrane pass occupies residues 246–266; the sequence is ESGVLGCGFLFFLLSTRYFSI. The Cytoplasmic portion of the chain corresponds to 267-271; the sequence is KKPKF. Residues 272–292 traverse the membrane as a helical segment; sequence FWVAAMAPLTSVILGSLLVYF. Residues 293–332 lie on the Extracellular side of the membrane; that stretch reads THAERHGVQVIGDLKKGLNPLSGSDLIFTSPYMSTAVKTG. The helical transmembrane segment at 333–353 threads the bilayer; the sequence is LITGIIALAEGVAVGRSFAMF. Residues 354–363 lie on the Cytoplasmic side of the membrane; it reads KNYNIDGNKE. A helical transmembrane segment spans residues 364–384; that stretch reads MIAFGMMNIVGSFTSCYLTTG. Over 385 to 398 the chain is Extracellular; the sequence is PFSRSAVNYNAGCK. Residues 399-419 form a helical membrane-spanning segment; sequence TAMSNIVMAIAVMFTLLFLTP. The Cytoplasmic segment spans residues 420 to 425; the sequence is LFHYTP. The helical transmembrane segment at 426–446 threads the bilayer; it reads LVVLSAIIISAMLGLIDYQAA. Topologically, residues 447–464 are extracellular; it reads IHLWKVDKFDFLVCMSAY. Residues 465–485 traverse the membrane as a helical segment; that stretch reads VGVVFGSVEIGLVVAVAISIA. The Cytoplasmic portion of the chain corresponds to 486 to 658; that stretch reads RLLLFVSRPK…ASKNEPWNNV (173 aa). One can recognise an STAS domain in the interval 513–637; sequence QYPSSRTVPG…LTVGEAVEAC (125 aa).

This sequence belongs to the SLC26A/SulP transporter (TC 2.A.53) family. Expressed only in leaves.

It is found in the membrane. Its function is as follows. H(+)/sulfate cotransporter that may play a role in the regulation of sulfate assimilation. The sequence is that of Sulfate transporter 3.1 (SULTR3;1) from Arabidopsis thaliana (Mouse-ear cress).